A 358-amino-acid chain; its full sequence is Magnesium-protoporphyrin IX monomethyl ester [oxidative] cyclase 1 (358 aa).

It belongs to the AcsF family. It depends on Fe cation as a cofactor.

It carries out the reaction Mg-protoporphyrin IX 13-monomethyl ester + 3 NADPH + 3 O2 + 2 H(+) = 3,8-divinyl protochlorophyllide a + 3 NADP(+) + 5 H2O. It functions in the pathway porphyrin-containing compound metabolism; chlorophyll biosynthesis (light-independent). In terms of biological role, catalyzes the formation of the isocyclic ring in chlorophyll biosynthesis. Mediates the cyclase reaction, which results in the formation of divinylprotochlorophyllide (Pchlide) characteristic of all chlorophylls from magnesium-protoporphyrin IX 13-monomethyl ester (MgPMME). The chain is Magnesium-protoporphyrin IX monomethyl ester [oxidative] cyclase 1 from Synechocystis sp. (strain ATCC 27184 / PCC 6803 / Kazusa).